The sequence spans 82 residues: Sulfur carrier protein TusA (82 aa).

The active-site Cysteine persulfide intermediate is Cys19.

This sequence belongs to the sulfur carrier protein TusA family.

It is found in the cytoplasm. Sulfur carrier protein which probably makes part of a sulfur-relay system. The chain is Sulfur carrier protein TusA from Photobacterium profundum (strain SS9).